Here is a 105-residue protein sequence, read N- to C-terminus: Large ribosomal subunit protein uL24 (105 aa).

Belongs to the universal ribosomal protein uL24 family. In terms of assembly, part of the 50S ribosomal subunit.

One of two assembly initiator proteins, it binds directly to the 5'-end of the 23S rRNA, where it nucleates assembly of the 50S subunit. Its function is as follows. One of the proteins that surrounds the polypeptide exit tunnel on the outside of the subunit. The protein is Large ribosomal subunit protein uL24 of Francisella tularensis subsp. novicida (strain U112).